The chain runs to 181 residues: Translation initiation factor IF-3, chloroplastic (181 aa).

Belongs to the IF-3 family. As to quaternary structure, monomer.

Its subcellular location is the plastid. It localises to the chloroplast. IF-3 binds to the 30S ribosomal subunit and shifts the equilibrium between 70S ribosomes and their 50S and 30S subunits in favor of the free subunits, thus enhancing the availability of 30S subunits on which protein synthesis initiation begins. In Gracilaria tenuistipitata var. liui (Red alga), this protein is Translation initiation factor IF-3, chloroplastic.